We begin with the raw amino-acid sequence, 372 residues long: Probable E3 ubiquitin-protein ligase makorin-1 (372 aa).

C3H1-type zinc fingers lie at residues 20 to 45 (KHVT…HDLT) and 48 to 75 (KPAA…HCKP). The tract at residues 78 to 110 (NEEFSSPQMLPPSSPSPSTDPESSQPAPRPKTQ) is disordered. A compositionally biased stretch (low complexity) spans 93 to 103 (SPSTDPESSQP). A C3H1-type 3 zinc finger spans residues 153–180 (ALRKQLCPYAAVGECRYGINCAYLHGDV). A makorin-type Cys-His region spans residues 181–208 (CDMCGLQVLHPTDNSQRSQHTKACIEAH). An RING-type zinc finger spans residues 226–280 (CGVCMEVVFEKANPSERRFGILSNCNHCYCLKCIRKWRSAKQFESKIIKSCPECR). The segment at 309 to 338 (GMGRKPCRYFDEGRGICPFGANCFYKHAFP) adopts a C3H1-type 4 zinc-finger fold.

The enzyme catalyses S-ubiquitinyl-[E2 ubiquitin-conjugating enzyme]-L-cysteine + [acceptor protein]-L-lysine = [E2 ubiquitin-conjugating enzyme]-L-cysteine + N(6)-ubiquitinyl-[acceptor protein]-L-lysine.. Its pathway is protein modification; protein ubiquitination. Functionally, E3 ubiquitin ligase catalyzing the covalent attachment of ubiquitin moieties onto substrate proteins. This Tetraodon nigroviridis (Spotted green pufferfish) protein is Probable E3 ubiquitin-protein ligase makorin-1.